The following is a 301-amino-acid chain: GTPase IMAP family member 3 (301 aa).

The Cytoplasmic segment spans residues 1 to 279 (METLQNVVTG…GKKLEVLHSD (279 aa)). Positions 20–223 (SRPLRILLVG…HSNDLFLHAE (204 aa)) constitute an AIG1-type G domain. Residues 29-37 (GKSGCGKSA), Ser50, 147-149 (RKE), and Asn184 each bind GTP. Residues 263 to 301 (VLKVLPIGKKLEVLHSDFCWYLVLAILIFFVFFFLLFYV) are required for targeting to the endoplasmic reticulum. Residues 280 to 300 (FCWYLVLAILIFFVFFFLLFY) form a helical; Anchor for type IV membrane protein membrane-spanning segment. A topological domain (lumenal) is located at residue Val301.

It belongs to the TRAFAC class TrmE-Era-EngA-EngB-Septin-like GTPase superfamily. AIG1/Toc34/Toc159-like paraseptin GTPase family. IAN subfamily. Interacts with BAD, BAK1, BAX, BCL2, BCL2L1/Bcl-xL and BCL2L11/BimEL. The interaction with BAX is increased, when cells initiate apoptosis upon IL2 withdrawal. As to expression, expressed in thymus (in thymocytes), spleen (in splenocytes), lymph node and, at lower levels, in lung. Highly expressed in T lymphocytes.

Its subcellular location is the endoplasmic reticulum membrane. Functionally, during thymocyte development, may support the positive selection of CD4 and CD8 T cells. May play a role in mitochondrial DNA segregation in hematopoietic tissues. Binds GTP. The protein is GTPase IMAP family member 3 (Gimap3) of Mus musculus (Mouse).